Consider the following 362-residue polypeptide: Phosphoserine aminotransferase (362 aa).

The L-glutamate site is built by S9 and R42. Residues 76-77 (AR), W102, T153, D174, and Q197 contribute to the pyridoxal 5'-phosphate site. Residue K198 is modified to N6-(pyridoxal phosphate)lysine. Position 239 to 240 (239 to 240 (NT)) interacts with pyridoxal 5'-phosphate.

It belongs to the class-V pyridoxal-phosphate-dependent aminotransferase family. SerC subfamily. Homodimer. It depends on pyridoxal 5'-phosphate as a cofactor.

It localises to the cytoplasm. The catalysed reaction is O-phospho-L-serine + 2-oxoglutarate = 3-phosphooxypyruvate + L-glutamate. The enzyme catalyses 4-(phosphooxy)-L-threonine + 2-oxoglutarate = (R)-3-hydroxy-2-oxo-4-phosphooxybutanoate + L-glutamate. Its pathway is amino-acid biosynthesis; L-serine biosynthesis; L-serine from 3-phospho-D-glycerate: step 2/3. The protein operates within cofactor biosynthesis; pyridoxine 5'-phosphate biosynthesis; pyridoxine 5'-phosphate from D-erythrose 4-phosphate: step 3/5. Its function is as follows. Catalyzes the reversible conversion of 3-phosphohydroxypyruvate to phosphoserine and of 3-hydroxy-2-oxo-4-phosphonooxybutanoate to phosphohydroxythreonine. This is Phosphoserine aminotransferase from Photorhabdus laumondii subsp. laumondii (strain DSM 15139 / CIP 105565 / TT01) (Photorhabdus luminescens subsp. laumondii).